We begin with the raw amino-acid sequence, 300 residues long: Small ribosomal subunit biogenesis GTPase RsgA (300 aa).

The region spanning 69–231 (RSDEMRVKQF…LIDSPGFQAF (163 aa)) is the CP-type G domain. GTP is bound by residues 119-122 (NKID) and 172-180 (GQSGMGKST). Positions 255, 260, 262, and 268 each coordinate Zn(2+).

It belongs to the TRAFAC class YlqF/YawG GTPase family. RsgA subfamily. As to quaternary structure, monomer. Associates with 30S ribosomal subunit, binds 16S rRNA. Zn(2+) serves as cofactor.

The protein localises to the cytoplasm. Functionally, one of several proteins that assist in the late maturation steps of the functional core of the 30S ribosomal subunit. Helps release RbfA from mature subunits. May play a role in the assembly of ribosomal proteins into the subunit. Circularly permuted GTPase that catalyzes slow GTP hydrolysis, GTPase activity is stimulated by the 30S ribosomal subunit. The chain is Small ribosomal subunit biogenesis GTPase RsgA from Bordetella bronchiseptica (strain ATCC BAA-588 / NCTC 13252 / RB50) (Alcaligenes bronchisepticus).